The sequence spans 336 residues: Phospho-N-acetylmuramoyl-pentapeptide-transferase (336 aa).

The next 10 membrane-spanning stretches (helical) occupy residues leucine 3–isoleucine 23, glycine 53–isoleucine 73, serine 78–leucine 98, leucine 118–isoleucine 138, valine 143–valine 163, glycine 174–alanine 194, phenylalanine 200–asparagine 220, valine 226–alanine 246, tryptophan 251–valine 271, and alanine 316–phenylalanine 336.

The protein belongs to the glycosyltransferase 4 family. MraY subfamily. Mg(2+) is required as a cofactor.

It localises to the cell membrane. The enzyme catalyses UDP-N-acetyl-alpha-D-muramoyl-L-alanyl-gamma-D-glutamyl-L-lysyl-D-alanyl-D-alanine + di-trans,octa-cis-undecaprenyl phosphate = Mur2Ac(oyl-L-Ala-gamma-D-Glu-L-Lys-D-Ala-D-Ala)-di-trans,octa-cis-undecaprenyl diphosphate + UMP. It functions in the pathway cell wall biogenesis; peptidoglycan biosynthesis. Catalyzes the initial step of the lipid cycle reactions in the biosynthesis of the cell wall peptidoglycan: transfers peptidoglycan precursor phospho-MurNAc-pentapeptide from UDP-MurNAc-pentapeptide onto the lipid carrier undecaprenyl phosphate, yielding undecaprenyl-pyrophosphoryl-MurNAc-pentapeptide, known as lipid I. The protein is Phospho-N-acetylmuramoyl-pentapeptide-transferase of Streptococcus pyogenes serotype M49 (strain NZ131).